Here is a 678-residue protein sequence, read N- to C-terminus: ATP-dependent RNA helicase DHX58 (678 aa).

Positions 11–188 (IMPALEGKNI…DGAINHVLQL (178 aa)) constitute a Helicase ATP-binding domain. Position 24–31 (24–31 (LPTGAGKT)) interacts with ATP. Residues 131–134 (DECH) carry the DECH box motif. Residues 350–514 (KLEMLEKILQ…QAVAAVQKMD (165 aa)) enclose the Helicase C-terminal domain. A coiled-coil region spans residues 489–546 (ELKRELINEALETLMEQAVAAVQKMDQAEYQAKIRDLQQAALTKRAAQAAQRENQRQQ). Residues 539 to 669 (QRENQRQQFP…PDFDFLQHCA (131 aa)) form the RLR CTR domain. Zn(2+) is bound by residues C556, C559, C612, and C615. An RNA-binding region spans residues 572 to 655 (VEGTHHVNVN…RIQAKKWSRV (84 aa)).

It belongs to the helicase family. RLR subfamily. In terms of assembly, monomer in the absence of dsRNA. Homodimer in the presence of dsRNA. Interacts with RIGI (via CARD domain), MAVS/IPS1 and DDX60. Found in a complex with RIGI and IFIH1/MDA5. Interacts with ANKRD17. Directly interacts with ATG5 and ATG12, either as ATG5 and ATG12 monomers or as ATG12-ATG5 conjugates. (Microbial infection) Interacts (via helicase C-terminal domain) with non-structural protein V of paramyxoviruses including human parainfluenza 2 virus, human parainfluenza 5 virus, measles virus, mumps virus, hendra virus and nipah virus. Expressed in testis, nerve and spleen. Also expressed in the brain.

It localises to the cytoplasm. The catalysed reaction is ATP + H2O = ADP + phosphate + H(+). Functionally, acts as a regulator of RIGI and IFIH1/MDA5 mediated antiviral signaling. Cannot initiate antiviral signaling as it lacks the CARD domain required for activating MAVS/IPS1-dependent signaling events. Can have both negative and positive regulatory functions related to RIGI and IFIH1/MDA5 signaling and this role in regulating signaling may be complex and could probably depend on characteristics of the infecting virus or target cells, or both. Its inhibitory action on RIG-I signaling may involve the following mechanisms: competition with RIGI for binding to the viral RNA, binding to RIGI and inhibiting its dimerization and interaction with MAVS/IPS1, competing with IKBKE in its binding to MAVS/IPS1 thereby inhibiting activation of interferon regulatory factor 3 (IRF3). Its positive regulatory role may involve unwinding or stripping nucleoproteins of viral RNA thereby facilitating their recognition by RIGI and IFIH1/MDA5. Involved in the innate immune response to various RNA viruses and some DNA viruses such as poxviruses and coronavirus SARS-CoV-2, and also to the bacterial pathogen Listeria monocytogenes. Can bind both ssRNA and dsRNA, with a higher affinity for dsRNA. Shows a preference to 5'-triphosphorylated RNA, although it can recognize RNA lacking a 5'-triphosphate. This chain is ATP-dependent RNA helicase DHX58, found in Homo sapiens (Human).